Reading from the N-terminus, the 208-residue chain is ATP-dependent Clp protease proteolytic subunit (208 aa).

Ser-106 (nucleophile) is an active-site residue. The active site involves His-131.

This sequence belongs to the peptidase S14 family. Fourteen ClpP subunits assemble into 2 heptameric rings which stack back to back to give a disk-like structure with a central cavity, resembling the structure of eukaryotic proteasomes.

The protein resides in the cytoplasm. It catalyses the reaction Hydrolysis of proteins to small peptides in the presence of ATP and magnesium. alpha-casein is the usual test substrate. In the absence of ATP, only oligopeptides shorter than five residues are hydrolyzed (such as succinyl-Leu-Tyr-|-NHMec, and Leu-Tyr-Leu-|-Tyr-Trp, in which cleavage of the -Tyr-|-Leu- and -Tyr-|-Trp bonds also occurs).. Functionally, cleaves peptides in various proteins in a process that requires ATP hydrolysis. Has a chymotrypsin-like activity. Plays a major role in the degradation of misfolded proteins. The protein is ATP-dependent Clp protease proteolytic subunit of Roseobacter denitrificans (strain ATCC 33942 / OCh 114) (Erythrobacter sp. (strain OCh 114)).